The primary structure comprises 100 residues: Putative pterin-4-alpha-carbinolamine dehydratase 2 (100 aa).

The protein belongs to the pterin-4-alpha-carbinolamine dehydratase family.

The catalysed reaction is (4aS,6R)-4a-hydroxy-L-erythro-5,6,7,8-tetrahydrobiopterin = (6R)-L-erythro-6,7-dihydrobiopterin + H2O. The protein is Putative pterin-4-alpha-carbinolamine dehydratase 2 of Cupriavidus pinatubonensis (strain JMP 134 / LMG 1197) (Cupriavidus necator (strain JMP 134)).